The sequence spans 568 residues: Clathrin coat assembly protein AP180B (568 aa).

In terms of domain architecture, ENTH spans 1 to 127; it reads MSSLYTKLVK…EEYGRLGMDH (127 aa). Over residues 262–283 the composition is skewed to basic and acidic residues; the sequence is HLREETKRQRGEPSEPQQDRKP. The tract at residues 262–302 is disordered; the sequence is HLREETKRQRGEPSEPQQDRKPSTAISSTSSHNNNSNDKNK. A Glycyl lysine isopeptide (Lys-Gly) (interchain with G-Cter in ubiquitin) cross-link involves residue lysine 282. The segment covering 284 to 298 has biased composition (low complexity); that stretch reads STAISSTSSHNNNSN. Threonine 449 carries the phosphothreonine modification.

It belongs to the AP180 family. Interacts with PAN1 and the clathrin heavy and light chains CHC1 and CLC1.

The protein resides in the bud. It is found in the bud neck. It localises to the cell membrane. The protein localises to the cytoplasm. In terms of biological role, involved in endocytosis and clathrin cage assembly. This chain is Clathrin coat assembly protein AP180B (YAP1802), found in Saccharomyces cerevisiae (strain ATCC 204508 / S288c) (Baker's yeast).